A 341-amino-acid chain; its full sequence is HTH-type transcriptional repressor PurR (341 aa).

Positions 2 to 56 constitute an HTH lacI-type domain; the sequence is ATIKDVAKHAGVSTTTVSHVINKTRFVAENTKAAVWAAIKELHYSPSAVARSLKV. Residues 4–23 constitute a DNA-binding region (H-T-H motif); sequence IKDVAKHAGVSTTTVSHVIN. A DNA-binding region spans residues 48-56; sequence SAVARSLKV. Hypoxanthine-binding residues include Tyr-73, Arg-190, Thr-192, Phe-221, and Asp-275.

As to quaternary structure, homodimer.

It participates in purine metabolism; purine nucleotide biosynthesis [regulation]. Its function is as follows. Is the main repressor of the genes involved in the de novo synthesis of purine nucleotides, regulating purB, purC, purEK, purF, purHD, purL, purMN and guaBA expression. PurR is allosterically activated to bind its cognate DNA by binding the purine corepressors, hypoxanthine or guanine, thereby effecting transcription repression. The sequence is that of HTH-type transcriptional repressor PurR from Yersinia enterocolitica serotype O:8 / biotype 1B (strain NCTC 13174 / 8081).